We begin with the raw amino-acid sequence, 182 residues long: Transmembrane and coiled-coil domain-containing protein 2 (182 aa).

Residues 51 to 71 (VQIILRISFLILLGIGIYALW) form a helical membrane-spanning segment. Positions 124-151 (GLQEKILKKLKTVENKMKNLEGIIVAQK) form a coiled coil.

The protein resides in the membrane. The chain is Transmembrane and coiled-coil domain-containing protein 2 (TMCO2) from Homo sapiens (Human).